Here is a 418-residue protein sequence, read N- to C-terminus: Gamma-glutamyl phosphate reductase (418 aa).

The protein belongs to the gamma-glutamyl phosphate reductase family.

It is found in the cytoplasm. It catalyses the reaction L-glutamate 5-semialdehyde + phosphate + NADP(+) = L-glutamyl 5-phosphate + NADPH + H(+). Its pathway is amino-acid biosynthesis; L-proline biosynthesis; L-glutamate 5-semialdehyde from L-glutamate: step 2/2. Functionally, catalyzes the NADPH-dependent reduction of L-glutamate 5-phosphate into L-glutamate 5-semialdehyde and phosphate. The product spontaneously undergoes cyclization to form 1-pyrroline-5-carboxylate. In Clostridium kluyveri (strain NBRC 12016), this protein is Gamma-glutamyl phosphate reductase.